We begin with the raw amino-acid sequence, 396 residues long: MAKLDFDRSKEHVNIGTIGHVDHGKTTLTAAIATVLSKKGLAEAKDYASIDAAPEEKARGITINTAHIEYETEKRHYAHVDCPGHADYVKNMITGAAQMDGGILVVSATDGPMPQTREHILLSKQVGVPKMVVFLNKVDMLEGEDEMIELVELEIRSLLSEYGFDGDKTPIIKGSALKALEGNPQYEKNIEELMDAVDNYIETPVKELDKPFLLAVEDVFTITGRGTVATGKVERGQLNINSEVEIVGFTEKPKKTTVTGIEMFRKNLKEAQAGDNAGLLLRGVDRNDVERGQVLAKPGSIVPHSKFEAAIYALKKEEGGRHTPFFSNYKPQFYFRTTDVTGGVVFPAGREMVMPGDNVDLVVELISPIAVEEGTKFSIREGGRTVGAGSVTKILK.

The region spanning 10-205 (KEHVNIGTIG…AVDNYIETPV (196 aa)) is the tr-type G domain. The interval 19 to 26 (GHVDHGKT) is G1. 19-26 (GHVDHGKT) is a binding site for GTP. A Mg(2+)-binding site is contributed by threonine 26. The tract at residues 60–64 (GITIN) is G2. A G3 region spans residues 81-84 (DCPG). Residues 81–85 (DCPGH) and 136–139 (NKVD) each bind GTP. Positions 136 to 139 (NKVD) are G4. Positions 175 to 177 (SAL) are G5.

The protein belongs to the TRAFAC class translation factor GTPase superfamily. Classic translation factor GTPase family. EF-Tu/EF-1A subfamily. Monomer.

It is found in the cytoplasm. The enzyme catalyses GTP + H2O = GDP + phosphate + H(+). Functionally, GTP hydrolase that promotes the GTP-dependent binding of aminoacyl-tRNA to the A-site of ribosomes during protein biosynthesis. This chain is Elongation factor Tu, found in Mycoplasmopsis pulmonis (strain UAB CTIP) (Mycoplasma pulmonis).